Here is a 198-residue protein sequence, read N- to C-terminus: Pyridoxal 5'-phosphate synthase subunit PdxT (198 aa).

L-glutamine is bound at residue 49 to 51 (GES). C81 (nucleophile) is an active-site residue. L-glutamine-binding positions include R113 and 141–142 (IR). Active-site charge relay system residues include H177 and E179.

Belongs to the glutaminase PdxT/SNO family. As to quaternary structure, in the presence of PdxS, forms a dodecamer of heterodimers. Only shows activity in the heterodimer.

The enzyme catalyses aldehydo-D-ribose 5-phosphate + D-glyceraldehyde 3-phosphate + L-glutamine = pyridoxal 5'-phosphate + L-glutamate + phosphate + 3 H2O + H(+). The catalysed reaction is L-glutamine + H2O = L-glutamate + NH4(+). It participates in cofactor biosynthesis; pyridoxal 5'-phosphate biosynthesis. Its function is as follows. Catalyzes the hydrolysis of glutamine to glutamate and ammonia as part of the biosynthesis of pyridoxal 5'-phosphate. The resulting ammonia molecule is channeled to the active site of PdxS. The protein is Pyridoxal 5'-phosphate synthase subunit PdxT of Mycobacterium avium (strain 104).